The primary structure comprises 241 residues: Triosephosphate isomerase (241 aa).

9–11 (NWK) serves as a coordination point for substrate. The active-site Electrophile is the H96. The Proton acceptor role is filled by E165. Substrate contacts are provided by residues G171, S204, and 225-226 (GG).

Belongs to the triosephosphate isomerase family. Homodimer.

The protein localises to the cytoplasm. It catalyses the reaction D-glyceraldehyde 3-phosphate = dihydroxyacetone phosphate. It participates in carbohydrate biosynthesis; gluconeogenesis. It functions in the pathway carbohydrate degradation; glycolysis; D-glyceraldehyde 3-phosphate from glycerone phosphate: step 1/1. Its function is as follows. Involved in the gluconeogenesis. Catalyzes stereospecifically the conversion of dihydroxyacetone phosphate (DHAP) to D-glyceraldehyde-3-phosphate (G3P). In Prochlorococcus marinus (strain MIT 9312), this protein is Triosephosphate isomerase.